A 189-amino-acid chain; its full sequence is Probable UbiX-like flavin prenyltransferase (189 aa).

FMN-binding positions include 9-11 (GAS), serine 36, 87-90 (SMKT), and arginine 122.

This sequence belongs to the UbiX/PAD1 family. YclB subfamily. As to quaternary structure, homododecamer.

It catalyses the reaction dimethylallyl phosphate + FMNH2 = prenylated FMNH2 + phosphate. Functionally, involved in the non-oxidative decarboxylation and detoxification of phenolic derivatives under anaerobic conditions. Flavin prenyltransferase that catalyzes the synthesis of the prenylated FMN cofactor (prenyl-FMN) for phenolic acid decarboxylase. This is Probable UbiX-like flavin prenyltransferase from Sedimentibacter hydroxybenzoicus (Clostridium hydroxybenzoicum).